The primary structure comprises 164 residues: Protein-export protein SecB (164 aa).

This sequence belongs to the SecB family. Homotetramer, a dimer of dimers. One homotetramer interacts with 1 SecA dimer.

Its subcellular location is the cytoplasm. In terms of biological role, one of the proteins required for the normal export of preproteins out of the cell cytoplasm. It is a molecular chaperone that binds to a subset of precursor proteins, maintaining them in a translocation-competent state. It also specifically binds to its receptor SecA. This Orientia tsutsugamushi (strain Ikeda) (Rickettsia tsutsugamushi) protein is Protein-export protein SecB.